We begin with the raw amino-acid sequence, 793 residues long: DnaJ homolog subfamily C member 10 (793 aa).

Positions 1-32 (MGVWLNRDEFIRDVKRISLCLLVLYVVIVVGT) are cleaved as a signal peptide. In terms of domain architecture, J spans 35 to 100 (NFYSLLGVSK…DLRKKYDKYG (66 aa)). The Thioredoxin 1 domain maps to 130-232 (EIITLERREF…ESLVSFAMQH (103 aa)). An intrachain disulfide couples Cys-158 to Cys-161. 2 trxb regions span residues 235 to 350 (TTVT…LPDF) and 348 to 463 (PDFE…PQNF). Thioredoxin domains are found at residues 454-553 (HVTT…IEDL), 557-665 (SVVS…SWGL), and 671-776 (ASID…ALIY). Cys-480 and Cys-483 are oxidised to a cystine. The N-linked (GlcNAc...) asparagine glycan is linked to Asn-530. Intrachain disulfides connect Cys-588-Cys-591 and Cys-700-Cys-703. Positions 790 to 793 (KDEL) match the Prevents secretion from ER motif.

In terms of assembly, interacts with HSPA5 (via its J domain). Interacts with EDEM1.

The protein resides in the endoplasmic reticulum lumen. Functionally, endoplasmic reticulum disulfide reductase involved both in the correct folding of proteins and degradation of misfolded proteins. Required for efficient folding of proteins in the endoplasmic reticulum by catalyzing the removal of non-native disulfide bonds formed during the folding of proteins, such as LDLR. Also involved in endoplasmic reticulum-associated degradation (ERAD) by reducing incorrect disulfide bonds in misfolded glycoproteins recognized by EDEM1. Interaction with HSPA5 is required its activity, not for the disulfide reductase activity, but to facilitate the release of DNAJC10 from its substrate. Promotes apoptotic signaling pathway in response to endoplasmic reticulum stress. The polypeptide is DnaJ homolog subfamily C member 10 (Dnajc10) (Rattus norvegicus (Rat)).